Reading from the N-terminus, the 246-residue chain is NAD-dependent protein deacylase (246 aa).

The Deacetylase sirtuin-type domain maps to 1–245 (MKEFITKHRD…ELIREILDNP (245 aa)). 20-39 (GAGISAESGIPTFRGSEGLW) is an NAD(+) binding site. Tyr-64 and Arg-67 together coordinate substrate. 98–101 (QNVD) contributes to the NAD(+) binding site. Catalysis depends on His-116, which acts as the Proton acceptor. Zn(2+)-binding residues include Cys-124, Cys-127, Cys-146, and Cys-149. NAD(+) contacts are provided by residues 186-188 (GTS), 212-214 (NPE), and Thr-230.

It belongs to the sirtuin family. Class III subfamily. Requires Zn(2+) as cofactor.

Its subcellular location is the cytoplasm. The catalysed reaction is N(6)-acetyl-L-lysyl-[protein] + NAD(+) + H2O = 2''-O-acetyl-ADP-D-ribose + nicotinamide + L-lysyl-[protein]. It carries out the reaction N(6)-succinyl-L-lysyl-[protein] + NAD(+) + H2O = 2''-O-succinyl-ADP-D-ribose + nicotinamide + L-lysyl-[protein]. Functionally, NAD-dependent lysine deacetylase and desuccinylase that specifically removes acetyl and succinyl groups on target proteins. Modulates the activities of several proteins which are inactive in their acylated form. In Leptospira interrogans serogroup Icterohaemorrhagiae serovar Lai (strain 56601), this protein is NAD-dependent protein deacylase.